We begin with the raw amino-acid sequence, 1434 residues long: Protein patched homolog 1 (1434 aa).

A compositionally biased stretch (low complexity) spans 1–13 (MASAGNAAGALGR). Residues 1 to 34 (MASAGNAAGALGRQAGGGRRRRTGGPHRAAPDRD) form a disordered region. Residues 1–86 (MASAGNAAGA…GCYIQKNCGK (86 aa)) lie on the Cytoplasmic side of the membrane. Residues 87–107 (FLVVGLLIFGAFAVGLKAANL) form a helical membrane-spanning segment. At 108–422 (ETNVEELWVE…LDDILKSFSD (315 aa)) the chain is on the extracellular side. Residues asparagine 127, asparagine 298, asparagine 335, and asparagine 400 are each glycosylated (N-linked (GlcNAc...) asparagine). Residues 423–443 (VSVIRVASGYLLMLAYACLTM) traverse the membrane as a helical segment. One can recognise an SSD domain in the interval 424–584 (SVIRVASGYL…LLIFPAILSM (161 aa)). Residues 444–458 (LRWDCSKSQGAVGLA) are Cytoplasmic-facing. A helical transmembrane segment spans residues 459 to 479 (GVLLVALSVAAGLGLCSLIGI). Over 480 to 487 (SFNAATTQ) the chain is Extracellular. The chain crosses the membrane as a helical span at residues 488-508 (VLPFLALGVGVDDVFLLAHAF). Over 509 to 533 (SETGQNKRIPFEDRTGECLKRTGAS) the chain is Cytoplasmic. A helical transmembrane segment spans residues 534-554 (VALTSISNVTAFFMAALIPIP). At 555 to 563 (ALRAFSLQA) the chain is on the extracellular side. The helical transmembrane segment at 564–584 (AVVVVFNFAMVLLIFPAILSM) threads the bilayer. Residues 585–734 (DLYRREDRRL…HYAPFLLKPK (150 aa)) are Cytoplasmic-facing. A helical membrane pass occupies residues 735 to 755 (AKVVVILLFLGLLGVSLYGTT). The Extracellular segment spans residues 756–1013 (RVRDGLDLTD…WEQYISLRHW (258 aa)). N-linked (GlcNAc...) asparagine glycosylation is found at asparagine 861 and asparagine 986. A helical membrane pass occupies residues 1014–1034 (LLLSISVVLACTFLVCAVFLL). The Cytoplasmic segment spans residues 1035-1039 (NPWTA). Residues 1040–1060 (GIIVMVLALMTVELFGMMGLI) form a helical membrane-spanning segment. At 1061-1069 (GIKLSAVPV) the chain is on the extracellular side. Residues 1070–1090 (VILIASVGIGVEFTVHVALAF) traverse the membrane as a helical segment. At 1091–1107 (LTAIGDKNHRAMLALEH) the chain is on the cytoplasmic side. A helical transmembrane segment spans residues 1108–1128 (MFAPVLDGAVSTLLGVLMLAG). Residues 1129 to 1140 (SEFDFIVRYFFA) are Extracellular-facing. A helical transmembrane segment spans residues 1141–1161 (VLAILTVLGVLNGLVLLPVLL). Topologically, residues 1162-1434 (SFFGPCPEVS…EERPWGSSSN (273 aa)) are cytoplasmic. Disordered regions lie at residues 1175 to 1219 (GLNR…TVSG), 1257 to 1348 (HPDS…SSVP), and 1368 to 1396 (HPPP…HGVF). The residue at position 1181 (threonine 1181) is a Phosphothreonine. Serine 1183 carries the post-translational modification Phosphoserine. Positions 1204 to 1213 (SDSSDSEYSS) are enriched in low complexity. Residues 1288–1297 (PRRDPPREGL) are compositionally biased toward basic and acidic residues. A compositionally biased stretch (polar residues) spans 1335-1348 (PRNPTSTAMGSSVP). Residue lysine 1413 forms a Glycyl lysine isopeptide (Lys-Gly) (interchain with G-Cter in ubiquitin) linkage.

It belongs to the patched family. In terms of assembly, interacts with SNX17. Interacts with IHH. Interacts with G-protein coupled receptor GPR37L1. In terms of processing, glycosylation is necessary for SHH binding. In the absence of Hh ligands, ubiquitination by ITCH at Lys-1413 promotes endocytosis and both proteasomal and lysosomal degradation. Detected in cerebellar Bergmann glia cells (at protein level). In the developing embryo, first detected within the ventral neural tube and later in the somites and limb buds. Expression in the limb buds is restricted to the posterior ectoderm surrounding the zone of polarizing activity. In the adult, expression is seen in brain, lung, liver, kidney and ocular tissues; lower levels in heart, skeletal muscle, and testis.

It localises to the cell membrane. In terms of biological role, acts as a receptor for sonic hedgehog (SHH), indian hedgehog (IHH) and desert hedgehog (DHH). Associates with the smoothened protein (SMO) to transduce the hedgehog's proteins signal. Seems to have a tumor suppressor function, as inactivation of this protein is probably a necessary, if not sufficient step for tumorigenesis. The polypeptide is Protein patched homolog 1 (Ptch1) (Mus musculus (Mouse)).